The chain runs to 213 residues: Putative nascent polypeptide-associated complex subunit alpha-like protein (213 aa).

Residues 1–46 (MPGEATETVPAIEQQLLQPQAETGSGTESDSDESVPELEEQDSTQV) are disordered. Residues 15-28 (QLLQPQAETGSGTE) show a composition bias toward polar residues. Residues 29-42 (SDSDESVPELEEQD) are compositionally biased toward acidic residues. Phosphoserine is present on residues Ser43 and Ser131. Residues 69–134 (RRSEKKARKA…AKIEDLSQEA (66 aa)) enclose the NAC-A/B domain. N6-acetyllysine; alternate is present on Lys141. Residue Lys141 forms a Glycyl lysine isopeptide (Lys-Gly) (interchain with G-Cter in SUMO2); alternate linkage. Thr160 carries the post-translational modification Phosphothreonine. Residues Ser165, Ser185, and Ser201 each carry the phosphoserine modification. The 37-residue stretch at 175-211 (VEIKDIELVLSQANVWGAKAVRALKNSNDIVNAIMEL) folds into the UBA domain. Phosphothreonine is present on Thr212.

The protein belongs to the NAC-alpha family.

The sequence is that of Putative nascent polypeptide-associated complex subunit alpha-like protein from Homo sapiens (Human).